The chain runs to 322 residues: NADH-cytochrome b5 reductase 2 (322 aa).

A helical transmembrane segment spans residues 30–46 (LAPVYVAVGLAGLGVGL). One can recognise an FAD-binding FR-type domain in the interval 71–176 (QGWVNLKLSD…KGPLPKYPWE (106 aa)). 179-214 (KHKHICLVAGGTGITPMYQLAREIFKNPEDKTKVTL) contributes to the FAD binding site.

Belongs to the flavoprotein pyridine nucleotide cytochrome reductase family. FAD serves as cofactor.

The protein resides in the mitochondrion outer membrane. It carries out the reaction 2 Fe(III)-[cytochrome b5] + NADH = 2 Fe(II)-[cytochrome b5] + NAD(+) + H(+). Functionally, may mediate the reduction of outer membrane cytochrome b5. This is NADH-cytochrome b5 reductase 2 (mcr1) from Emericella nidulans (strain FGSC A4 / ATCC 38163 / CBS 112.46 / NRRL 194 / M139) (Aspergillus nidulans).